The primary structure comprises 507 residues: ATP synthase subunit alpha, chloroplastic (507 aa).

An ATP-binding site is contributed by G170–T177. T257 is modified (phosphothreonine).

Belongs to the ATPase alpha/beta chains family. In terms of assembly, F-type ATPases have 2 components, CF(1) - the catalytic core - and CF(0) - the membrane proton channel. CF(1) has five subunits: alpha(3), beta(3), gamma(1), delta(1), epsilon(1). CF(0) has four main subunits: a, b, b' and c.

It localises to the plastid. The protein localises to the chloroplast thylakoid membrane. It carries out the reaction ATP + H2O + 4 H(+)(in) = ADP + phosphate + 5 H(+)(out). Produces ATP from ADP in the presence of a proton gradient across the membrane. The alpha chain is a regulatory subunit. The protein is ATP synthase subunit alpha, chloroplastic of Aethionema grandiflorum (Persian stone-cress).